Here is a 347-residue protein sequence, read N- to C-terminus: 5-formaminoimidazole-4-carboxamide-1-(beta)-D-ribofuranosyl 5'-monophosphate synthetase (347 aa).

The 5-amino-1-(5-phospho-beta-D-ribosyl)imidazole-4-carboxamide site is built by H23 and S91. The 212-residue stretch at 112-323 (RKILLWESDQ…YSYLYWDEPM (212 aa)) folds into the ATP-grasp domain. Residues 142–196 (PDEV…VPAY) and E218 contribute to the ATP site. N244 contributes to the 5-amino-1-(5-phospho-beta-D-ribosyl)imidazole-4-carboxamide binding site. Residues E283 and E296 each coordinate Mg(2+).

Belongs to the phosphohexose mutase family. The cofactor is Mg(2+). It depends on Mn(2+) as a cofactor.

The catalysed reaction is 5-amino-1-(5-phospho-beta-D-ribosyl)imidazole-4-carboxamide + formate + ATP = 5-formamido-1-(5-phospho-D-ribosyl)imidazole-4-carboxamide + ADP + phosphate. It functions in the pathway purine metabolism; IMP biosynthesis via de novo pathway; 5-formamido-1-(5-phospho-D-ribosyl)imidazole-4-carboxamide from 5-amino-1-(5-phospho-D-ribosyl)imidazole-4-carboxamide (formate route): step 1/1. In terms of biological role, catalyzes the ATP- and formate-dependent formylation of 5-aminoimidazole-4-carboxamide-1-beta-d-ribofuranosyl 5'-monophosphate (AICAR) to 5-formaminoimidazole-4-carboxamide-1-beta-d-ribofuranosyl 5'-monophosphate (FAICAR) in the absence of folates. This Ignicoccus hospitalis (strain KIN4/I / DSM 18386 / JCM 14125) protein is 5-formaminoimidazole-4-carboxamide-1-(beta)-D-ribofuranosyl 5'-monophosphate synthetase.